Consider the following 185-residue polypeptide: Ribosome-recycling factor (185 aa).

This sequence belongs to the RRF family.

The protein localises to the cytoplasm. Responsible for the release of ribosomes from messenger RNA at the termination of protein biosynthesis. May increase the efficiency of translation by recycling ribosomes from one round of translation to another. This chain is Ribosome-recycling factor, found in Streptococcus agalactiae serotype V (strain ATCC BAA-611 / 2603 V/R).